Here is a 587-residue protein sequence, read N- to C-terminus: MLCLSLNSSSTSPPKLPLHHSFSRRGIRSWVRSPCVQRKKLGFWSSPKAVLSAVSGAGSEAGKVEEAEEYDAIVIGSGIGGLVAATQLAVKGARVLVLEKYVIPGGSSGFFQRDGFTFDVGSSVMFGFSDKGNLNLITQALEAVDCKLRTIPDPTTVHFHLPDNLSIRVHREYDMFISELVNYFPHEKEGIRRFYNECWKIFNSLNSLELKSLEEPMYLFGQFFRKPVECLTLAFYLPQNAGDIARKFIKDPQLLSFIDAECFIVSTVKALHTPMINASMVLCDRHFGGINYPVGGVGGIAKALANGLVNKGSKLLYKANVTKILLKDGKAVGVKLSNGREFFAKTVISNATRWDTFGKLLKVEDIPQEEKNFKKIYLKAPSFLSIHMGVKAFVLPPDTDCHHFILEDNWGRLELPYGSIFLSIPTVLDPSLAPEGHHIFHIFTTSSIENWEGLSHKEYEEKKELVADEIITRLEKKLFPGLKDSVVLKEVGTPKTHRRFLARDSGTYGPMPRKVPKGLLGMPFNTTAINGLYCVGDSCFPGQGVIAVAFSGVMCAHRVAADLGFEKKAPVLDAALLRLLGWLRTVA.

The transit peptide at 1–50 (MLCLSLNSSSTSPPKLPLHHSFSRRGIRSWVRSPCVQRKKLGFWSSPKAV) directs the protein to the chloroplast.

Belongs to the carotenoid/retinoid oxidoreductase family. CrtISO subfamily. NAD(+) is required as a cofactor. It depends on NADP(+) as a cofactor. Requires FAD as cofactor. In terms of tissue distribution, up-regulated in the flower buds and flower lip tissue, while it is weakly expressed in leaves.

It is found in the plastid. Its subcellular location is the chloroplast membrane. The enzyme catalyses 7,7',9,9'-tetra-cis-lycopene = all-trans-lycopene. The protein operates within carotenoid biosynthesis; lycopene biosynthesis. Its function is as follows. Carotene cis-trans-isomerase that converts 7,9,9'-tri-cis-neurosporene to 9'-cis-neurosporene and 7,9,9',7'-tetra-cis-lycopene (also known as prolycopene) into all-trans-lycopene. Isomerization requires redox-active components, suggesting that isomerization is achieved by a reversible redox reaction acting at specific double bonds. Isomerizes adjacent cis-double bonds at C7 and C9 pairwise into the trans-configuration, but is incapable of isomerizing single cis-double bonds at C9 and C9'. This chain is Prolycopene isomerase 2, chloroplastic (CRTISO2), found in Oncidium hybrid cultivar (Orchid).